Here is a 518-residue protein sequence, read N- to C-terminus: Myosin-binding protein 7 (518 aa).

Positions 69–167 constitute a GTD-binding domain; the sequence is NELELLRETV…ALTFEAQAYK (99 aa). Residues 276–350 form a disordered region; it reads VVGQSPRHQR…DSSEIGDNDM (75 aa). The span at 291-301 shows a compositional bias: low complexity; it reads STGSASSLLGT. Over residues 310-320 the composition is skewed to polar residues; the sequence is SNDSPRSNNGS. Ser-385 bears the Phosphoserine mark. A coiled-coil region spans residues 399–431; the sequence is EISKLYMRLQALEADRESMRQAIMSMRTEKAQM. A helical transmembrane segment spans residues 458–477; the sequence is IIGAFNFISVFKWITSFVFW.

Interacts with myosin XI-I.

It is found in the endomembrane system. Its function is as follows. Membrane-anchored myosin receptors that define a distinct, plant-specific transport vesicle compartment. This Arabidopsis thaliana (Mouse-ear cress) protein is Myosin-binding protein 7.